A 434-amino-acid polypeptide reads, in one-letter code: Trigger factor (434 aa).

The PPIase FKBP-type domain maps to glycine 161–proline 246.

The protein belongs to the FKBP-type PPIase family. Tig subfamily.

It is found in the cytoplasm. The catalysed reaction is [protein]-peptidylproline (omega=180) = [protein]-peptidylproline (omega=0). Involved in protein export. Acts as a chaperone by maintaining the newly synthesized protein in an open conformation. Functions as a peptidyl-prolyl cis-trans isomerase. This chain is Trigger factor, found in Aromatoleum aromaticum (strain DSM 19018 / LMG 30748 / EbN1) (Azoarcus sp. (strain EbN1)).